Here is a 395-residue protein sequence, read N- to C-terminus: S-adenosylmethionine synthase (395 aa).

His16 contacts ATP. Asp18 serves as a coordination point for Mg(2+). Glu44 is a binding site for K(+). 2 residues coordinate L-methionine: Glu57 and Gln100. Residues 100–110 (QSPDIAQGVDR) are flexible loop. ATP-binding positions include 167–169 (DAK), 233–234 (RF), Asp242, 248–249 (RK), Ala265, and Lys269. Residue Asp242 participates in L-methionine binding. Position 273 (Lys273) interacts with L-methionine.

The protein belongs to the AdoMet synthase family. Homotetramer; dimer of dimers. Mg(2+) serves as cofactor. It depends on K(+) as a cofactor.

The protein localises to the cytoplasm. It carries out the reaction L-methionine + ATP + H2O = S-adenosyl-L-methionine + phosphate + diphosphate. It functions in the pathway amino-acid biosynthesis; S-adenosyl-L-methionine biosynthesis; S-adenosyl-L-methionine from L-methionine: step 1/1. Its function is as follows. Catalyzes the formation of S-adenosylmethionine (AdoMet) from methionine and ATP. The overall synthetic reaction is composed of two sequential steps, AdoMet formation and the subsequent tripolyphosphate hydrolysis which occurs prior to release of AdoMet from the enzyme. This is S-adenosylmethionine synthase from Burkholderia cenocepacia (strain ATCC BAA-245 / DSM 16553 / LMG 16656 / NCTC 13227 / J2315 / CF5610) (Burkholderia cepacia (strain J2315)).